The sequence spans 341 residues: Protein arginine N-methyltransferase 1 (341 aa).

Positions 20-315 (ADYYFDSYSH…DCAPFDKNQR (296 aa)) constitute an SAM-dependent MTase PRMT-type domain. S-adenosyl-L-methionine contacts are provided by histidine 33, arginine 42, glycine 66, aspartate 88, and glutamate 117. Active-site residues include glutamate 132 and glutamate 141.

It belongs to the class I-like SAM-binding methyltransferase superfamily. Protein arginine N-methyltransferase family.

The protein resides in the nucleus. It localises to the cytoplasm. The protein localises to the cytosol. The catalysed reaction is L-arginyl-[protein] + 2 S-adenosyl-L-methionine = N(omega),N(omega)-dimethyl-L-arginyl-[protein] + 2 S-adenosyl-L-homocysteine + 2 H(+). It carries out the reaction L-arginyl-[protein] + S-adenosyl-L-methionine = N(omega)-methyl-L-arginyl-[protein] + S-adenosyl-L-homocysteine + H(+). Arginine methyltransferase that methylates the guanidino nitrogens of arginyl residues present in proteins such as ribonucleoproteins and histones. In Dictyostelium discoideum (Social amoeba), this protein is Protein arginine N-methyltransferase 1 (prmt1).